The chain runs to 162 residues: uncharacterized protein (162 aa).

To R.meliloti R02472.

This is an uncharacterized protein from Escherichia coli (strain K12).